The chain runs to 118 residues: ATP synthase subunit g, mitochondrial (118 aa).

The protein belongs to the ATPase g subunit family. As to quaternary structure, F-type ATPases have 2 components, CF(1) - the catalytic core - and CF(0) - the membrane proton channel.

The protein localises to the mitochondrion membrane. Functionally, mitochondrial membrane ATP synthase (F(1)F(0) ATP synthase or Complex V) produces ATP from ADP in the presence of a proton gradient across the membrane which is generated by electron transport complexes of the respiratory chain. F-type ATPases consist of two structural domains, F(1) - containing the extramembraneous catalytic core, and F(0) - containing the membrane proton channel, linked together by a central stalk and a peripheral stalk. During catalysis, ATP synthesis in the catalytic domain of F(1) is coupled via a rotary mechanism of the central stalk subunits to proton translocation. Part of the complex F(0) domain. Minor subunit located with subunit a in the membrane. This is ATP synthase subunit g, mitochondrial (atp20) from Schizosaccharomyces pombe (strain 972 / ATCC 24843) (Fission yeast).